We begin with the raw amino-acid sequence, 371 residues long: 4-hydroxy-3-methylbut-2-en-1-yl diphosphate synthase (flavodoxin) (371 aa).

4 residues coordinate [4Fe-4S] cluster: Cys-270, Cys-273, Cys-305, and Glu-312.

It belongs to the IspG family. Requires [4Fe-4S] cluster as cofactor.

The catalysed reaction is (2E)-4-hydroxy-3-methylbut-2-enyl diphosphate + oxidized [flavodoxin] + H2O + 2 H(+) = 2-C-methyl-D-erythritol 2,4-cyclic diphosphate + reduced [flavodoxin]. The protein operates within isoprenoid biosynthesis; isopentenyl diphosphate biosynthesis via DXP pathway; isopentenyl diphosphate from 1-deoxy-D-xylulose 5-phosphate: step 5/6. Converts 2C-methyl-D-erythritol 2,4-cyclodiphosphate (ME-2,4cPP) into 1-hydroxy-2-methyl-2-(E)-butenyl 4-diphosphate. The polypeptide is 4-hydroxy-3-methylbut-2-en-1-yl diphosphate synthase (flavodoxin) (Shewanella frigidimarina (strain NCIMB 400)).